The primary structure comprises 455 residues: uncharacterized protein (455 aa).

Low complexity predominate over residues M1–S20. Disordered stretches follow at residues M1–T234 and R258–K304. Composition is skewed to basic and acidic residues over residues E35–Q46, S61–S75, R129–D143, R156–R166, and P173–G186. Over residues S213–R224 the composition is skewed to polar residues. The segment covering A260–A271 has biased composition (low complexity).

This is an uncharacterized protein from Arabidopsis thaliana (Mouse-ear cress).